The sequence spans 315 residues: Olfactory receptor 5P59 (315 aa).

At methionine 1–valine 28 the chain is on the extracellular side. N-linked (GlcNAc...) asparagine glycosylation occurs at asparagine 8. Residues valine 29–isoleucine 49 form a helical membrane-spanning segment. Topologically, residues leucine 50 to glutamine 57 are cytoplasmic. The helical transmembrane segment at leucine 58 to serine 78 threads the bilayer. At serine 79 to isoleucine 102 the chain is on the extracellular side. Cysteine 100 and cysteine 193 are oxidised to a cystine. Residues glutamine 103 to tyrosine 123 traverse the membrane as a helical segment. The Cytoplasmic segment spans residues aspartate 124–serine 136. The chain crosses the membrane as a helical span at residues threonine 137–leucine 157. At asparagine 158 to valine 200 the chain is on the extracellular side. The helical transmembrane segment at leucine 201 to serine 221 threads the bilayer. Residues tyrosine 222–alanine 241 lie on the Cytoplasmic side of the membrane. The chain crosses the membrane as a helical span at residues phenylalanine 242 to isoleucine 262. At tyrosine 263–asparagine 275 the chain is on the extracellular side. A helical transmembrane segment spans residues lysine 276–leucine 296. At serine 297–serine 315 the chain is on the cytoplasmic side.

This sequence belongs to the G-protein coupled receptor 1 family.

Its subcellular location is the cell membrane. Its function is as follows. Potential odorant receptor. The polypeptide is Olfactory receptor 5P59 (Mus musculus (Mouse)).